A 1204-amino-acid polypeptide reads, in one-letter code: Integrator complex subunit 2 (1204 aa).

Residues 428–444 (FVSLSFCMLLAFSTLVS) traverse the membrane as a helical segment.

It belongs to the Integrator subunit 2 family. As to quaternary structure, component of the Integrator complex, composed of core subunits INTS1, INTS2, INTS3, INTS4, INTS5, INTS6, INTS7, INTS8, INTS9/RC74, INTS10, INTS11/CPSF3L, INTS12, INTS13, INTS14 and INTS15. The core complex associates with protein phosphatase 2A subunits PPP2CA and PPP2R1A, to form the Integrator-PP2A (INTAC) complex.

It is found in the nucleus. The protein localises to the nucleus membrane. It localises to the cytoplasm. Component of the integrator complex, a multiprotein complex that terminates RNA polymerase II (Pol II) transcription in the promoter-proximal region of genes. The integrator complex provides a quality checkpoint during transcription elongation by driving premature transcription termination of transcripts that are unfavorably configured for transcriptional elongation: the complex terminates transcription by (1) catalyzing dephosphorylation of the C-terminal domain (CTD) of Pol II subunit POLR2A/RPB1 and SUPT5H/SPT5, (2) degrading the exiting nascent RNA transcript via endonuclease activity and (3) promoting the release of Pol II from bound DNA. The integrator complex is also involved in terminating the synthesis of non-coding Pol II transcripts, such as enhancer RNAs (eRNAs), small nuclear RNAs (snRNAs), telomerase RNAs and long non-coding RNAs (lncRNAs). Mediates recruitment of cytoplasmic dynein to the nuclear envelope, probably as component of the integrator complex. This Homo sapiens (Human) protein is Integrator complex subunit 2.